A 68-amino-acid polypeptide reads, in one-letter code: ATP synthase F(0) complex subunit 8 (68 aa).

A helical transmembrane segment spans residues 8–24 (TWFTIIMAMLPTLYLIT). At lysine 54 the chain carries N6-acetyllysine; alternate. The residue at position 54 (lysine 54) is an N6-succinyllysine; alternate. Lysine 57 is modified (N6-acetyllysine).

It belongs to the ATPase protein 8 family. Component of the ATP synthase complex composed at least of ATP5F1A/subunit alpha, ATP5F1B/subunit beta, ATP5MC1/subunit c (homooctomer), MT-ATP6/subunit a, MT-ATP8/subunit 8, ATP5ME/subunit e, ATP5MF/subunit f, ATP5MG/subunit g, ATP5MK/subunit k, ATP5MJ/subunit j, ATP5F1C/subunit gamma, ATP5F1D/subunit delta, ATP5F1E/subunit epsilon, ATP5PF/subunit F6, ATP5PB/subunit b, ATP5PD/subunit d, ATP5PO/subunit OSCP. ATP synthase complex consists of a soluble F(1) head domain (subunits alpha(3) and beta(3)) - the catalytic core - and a membrane F(0) domain - the membrane proton channel (subunits c, a, 8, e, f, g, k and j). These two domains are linked by a central stalk (subunits gamma, delta, and epsilon) rotating inside the F1 region and a stationary peripheral stalk (subunits F6, b, d, and OSCP). Interacts with PRICKLE3.

Its subcellular location is the mitochondrion membrane. In terms of biological role, subunit 8, of the mitochondrial membrane ATP synthase complex (F(1)F(0) ATP synthase or Complex V) that produces ATP from ADP in the presence of a proton gradient across the membrane which is generated by electron transport complexes of the respiratory chain. ATP synthase complex consist of a soluble F(1) head domain - the catalytic core - and a membrane F(1) domain - the membrane proton channel. These two domains are linked by a central stalk rotating inside the F(1) region and a stationary peripheral stalk. During catalysis, ATP synthesis in the catalytic domain of F(1) is coupled via a rotary mechanism of the central stalk subunits to proton translocation. In vivo, can only synthesize ATP although its ATP hydrolase activity can be activated artificially in vitro. Part of the complex F(0) domain. The chain is ATP synthase F(0) complex subunit 8 from Papio hamadryas (Hamadryas baboon).